Here is a 244-residue protein sequence, read N- to C-terminus: Protein TIFY 10b (244 aa).

In terms of domain architecture, Tify spans 97–132 (QEPEKRQLTIFYGGKVLVFNDFPADKAKGLMQLASK). Positions 185–210 (PIARKASLHRFLEKRKDRLNAKTPYQ) match the Jas motif. A Nuclear localization signal motif is present at residues 187 to 194 (ARKASLHR). The segment at 193-244 (HRFLEKRKDRLNAKTPYQASPSDATPVKKEPESQPWLGLGPNAVVKPIERGQ) is disordered. Residues 194–204 (RFLEKRKDRLN) show a composition bias toward basic and acidic residues.

Belongs to the TIFY/JAZ family. In terms of processing, ubiquitinated. Targeted for degradation by the SCF(COI1) E3 ubiquitin ligase-proteasome pathway during jasmonate signaling.

Its subcellular location is the nucleus. Repressor of jasmonate responses. This Oryza sativa subsp. indica (Rice) protein is Protein TIFY 10b.